The sequence spans 390 residues: GTP 3',8-cyclase, mitochondrial (390 aa).

Residues 1 to 45 (MRRCFSKITDCHLGFKNSNFLLVGSEVGSGSVTRTITTTTSERLF) constitute a mitochondrion transit peptide. Residues 69–290 (KFGRLHTYLR…PSIKRMQDHP (222 aa)) enclose the Radical SAM core domain. Arginine 78 lines the GTP pocket. [4Fe-4S] cluster contacts are provided by cysteine 85 and cysteine 89. Residue tyrosine 91 coordinates S-adenosyl-L-methionine. Cysteine 92 is a [4Fe-4S] cluster binding site. Arginine 128 lines the GTP pocket. An S-adenosyl-L-methionine-binding site is contributed by glycine 132. Threonine 159 provides a ligand contact to GTP. Serine 183 provides a ligand contact to S-adenosyl-L-methionine. GTP is bound at residue lysine 220. Methionine 254 contributes to the S-adenosyl-L-methionine binding site. Residues cysteine 317 and cysteine 320 each coordinate [4Fe-4S] cluster. Position 322 to 324 (322 to 324 (RLR)) interacts with GTP. Cysteine 334 is a binding site for [4Fe-4S] cluster.

The protein belongs to the radical SAM superfamily. MoaA family. Homodimer. Requires [4Fe-4S] cluster as cofactor. Expressed in all organs, with an abundant expression in the roots.

The protein resides in the mitochondrion matrix. It catalyses the reaction GTP + AH2 + S-adenosyl-L-methionine = (8S)-3',8-cyclo-7,8-dihydroguanosine 5'-triphosphate + 5'-deoxyadenosine + L-methionine + A + H(+). It participates in cofactor biosynthesis; molybdopterin biosynthesis. Functionally, catalyzes the cyclization of GTP to (8S)-3',8-cyclo-7,8-dihydroguanosine 5'-triphosphate. This chain is GTP 3',8-cyclase, mitochondrial (CNX2), found in Arabidopsis thaliana (Mouse-ear cress).